A 139-amino-acid polypeptide reads, in one-letter code: MPWRAGNGVGLEAQAGTQEAGPEEYCQEELGAEEEMAARAAWPVLRSVNSRELSRIIICNHSPRIVLPVWLNYYGKLLPYLTLLPGRDFRIHNFRSHPWLFRDARTHDKLLVNQTELFVPSSNVNGQPVFANITLQCIP.

The segment at 1 to 22 (MPWRAGNGVGLEAQAGTQEAGP) is disordered. Residues 54-135 (SRIIICNHSP…GQPVFANITL (82 aa)) form a beta-domain region.

The protein belongs to the VHL family. Interacts via the beta domain with the ODD domain of HIF1A. This interaction is independent of prolyl hydroxylation of HIF1A. As to expression, abundantly expressed in the placenta.

In terms of biological role, functions as a dominant-negative VHL to serve as a protector of HIFalpha. This Homo sapiens (Human) protein is von Hippel-Lindau-like protein (VHLL).